The sequence spans 221 residues: Max dimerization protein 1 (221 aa).

The Nuclear localization signal motif lies at 21-49 (RREREAEHGYASMLPYNNKDRDALKRRNK). 2 disordered regions span residues 30–68 (YASMLPYNNKDRDALKRRNKSKKNNSSSRSTHNEMEKNR) and 173–204 (TGDLDWSSSSVSDSDERGSMQSLGSDEGYSST). The bHLH domain maps to 56–108 (SSRSTHNEMEKNRRAHLRLCLEKLKGLVPLGPESSRHTTLSLLTKAKLHIKKL). The span at 175–184 (DLDWSSSSVS) shows a compositional bias: low complexity. A compositionally biased stretch (polar residues) spans 191-204 (SMQSLGSDEGYSST).

In terms of assembly, heterodimer with MAX; the interaction is required for DNA-binding. DNA binding requires dimerization with another bHLH protein; does not form homodimers, and does not bind to DNA in the absence of MAX in vitro. Interacts with RNF17. Post-translationally, ubiquitinated by BIRC2/c-IAP1, leading to its subsequent degradation by the proteasome.

Its subcellular location is the nucleus. Component of a transcriptional repressor complex together with MAX. In complex with MAX binds to the core DNA sequence 5'-CAC[GA]TG-3'. Antagonizes MYC transcriptional activity by competing with MYC for MAX binding. Binds to the TERT promoter and represses telomerase expression, possibly by interfering with MYC binding. The chain is Max dimerization protein 1 (MXD1) from Homo sapiens (Human).